The chain runs to 135 residues: Large ribosomal subunit protein bL17 (135 aa).

It belongs to the bacterial ribosomal protein bL17 family. In terms of assembly, part of the 50S ribosomal subunit. Contacts protein L32.

This Listeria innocua serovar 6a (strain ATCC BAA-680 / CLIP 11262) protein is Large ribosomal subunit protein bL17.